The sequence spans 130 residues: Large ribosomal subunit protein bL17 (130 aa).

This sequence belongs to the bacterial ribosomal protein bL17 family. Part of the 50S ribosomal subunit. Contacts protein L32.

The chain is Large ribosomal subunit protein bL17 from Pectobacterium atrosepticum (strain SCRI 1043 / ATCC BAA-672) (Erwinia carotovora subsp. atroseptica).